The sequence spans 376 residues: Multicilin (376 aa).

The stretch at 165 to 213 forms a coiled coil; that stretch reads EQYWRDVADHNQKALGDALVENNQLQVSLTEKQEEIASLKEKNIQLNEL. The interval 230-261 is disordered; it reads ERPKHSSGATQGRLPVKRSLEDFYPQSNEPDS. The segment at 331–376 is TIRT domain; that stretch reads TELEEDVSFRTSIKEHSTIRTLAFPQGNAFTIRTAAGGYKFRWVPN.

It belongs to the geminin family. As to quaternary structure, component of the EDM complex, at least composed of e2f4, e2f5, mcidas and tfdp1.

The protein resides in the nucleus. Its function is as follows. Transcription regulator specifically required for multiciliate cell differentiation. Acts in a multiprotein complex containing e2f4 and e2f5 that binds and activate genes required for centriole biogenesis. Activates genes required for centriole assembly (plk4, cep152) and genes specifically required for motile cilia formation (foxj1). Also promotes the deuterosome pathway of centriole biogenesis by activating expression of deup1, but not its paralog cep63. The sequence is that of Multicilin (mcidas) from Xenopus tropicalis (Western clawed frog).